Here is a 422-residue protein sequence, read N- to C-terminus: Histidine--tRNA ligase (422 aa).

Belongs to the class-II aminoacyl-tRNA synthetase family. Homodimer.

It localises to the cytoplasm. The enzyme catalyses tRNA(His) + L-histidine + ATP = L-histidyl-tRNA(His) + AMP + diphosphate + H(+). The sequence is that of Histidine--tRNA ligase from Vibrio vulnificus (strain CMCP6).